A 451-amino-acid polypeptide reads, in one-letter code: TERF1-interacting nuclear factor 2 (451 aa).

An N-acetylalanine modification is found at alanine 2. The interval 229–257 is disordered; that stretch reads NPLPKAKPGTHLPQGPSSRTHPEPLAGRH. The short motif at 256–278 is the TBM element; sequence RHFNLAPLGRRRVQSQWASTRGG. A Nuclear localization signal motif is present at residues 262-268; sequence PLGRRRV. At serine 295 the chain carries Phosphoserine. Glycyl lysine isopeptide (Lys-Gly) (interchain with G-Cter in SUMO2) cross-links involve residues lysine 302, lysine 306, lysine 341, and lysine 353.

As to quaternary structure, monomer. Found in a complex with POT1; TERF1 and TNKS1. Component of the shelterin complex (telosome) composed of TERF1, TERF2, TINF2, TERF2IP ACD and POT1. Interacts with TERF1, TERF2 and ACD. As to expression, detected in heart, brain, placenta, lung, liver, skeletal muscle, kidney and pancreas.

It is found in the nucleus. Its subcellular location is the chromosome. It localises to the telomere. The protein resides in the nucleus matrix. Component of the shelterin complex (telosome) that is involved in the regulation of telomere length and protection. Shelterin associates with arrays of double-stranded TTAGGG repeats added by telomerase and protects chromosome ends; without its protective activity, telomeres are no longer hidden from the DNA damage surveillance and chromosome ends are inappropriately processed by DNA repair pathways. Plays a role in shelterin complex assembly. Isoform 1 may have additional role in tethering telomeres to the nuclear matrix. The sequence is that of TERF1-interacting nuclear factor 2 (TINF2) from Homo sapiens (Human).